The chain runs to 210 residues: Thymidylate kinase (210 aa).

An ATP-binding site is contributed by 10 to 17; it reads GLEGAGKT.

Belongs to the thymidylate kinase family.

It carries out the reaction dTMP + ATP = dTDP + ADP. Phosphorylation of dTMP to form dTDP in both de novo and salvage pathways of dTTP synthesis. The chain is Thymidylate kinase from Erwinia tasmaniensis (strain DSM 17950 / CFBP 7177 / CIP 109463 / NCPPB 4357 / Et1/99).